The sequence spans 156 residues: Small ribosomal subunit protein uS7 (156 aa).

This sequence belongs to the universal ribosomal protein uS7 family. Part of the 30S ribosomal subunit. Contacts proteins S9 and S11.

In terms of biological role, one of the primary rRNA binding proteins, it binds directly to 16S rRNA where it nucleates assembly of the head domain of the 30S subunit. Is located at the subunit interface close to the decoding center, probably blocks exit of the E-site tRNA. This chain is Small ribosomal subunit protein uS7, found in Aliivibrio salmonicida (strain LFI1238) (Vibrio salmonicida (strain LFI1238)).